Here is a 169-residue protein sequence, read N- to C-terminus: uncharacterized protein (169 aa).

This is an uncharacterized protein from Saimiriine herpesvirus 2 (strain 11) (SaHV-2).